The primary structure comprises 486 residues: Kynurenine 3-monooxygenase (486 aa).

Residues V19, 37 to 40 (YEAR), and A57 contribute to the FAD site. L-kynurenine-binding residues include R85 and Y99. FAD contacts are provided by residues R111, L136, T172, D304, and 317–318 (MN). Residues N363 and Y398 each contribute to the L-kynurenine site. 2 helical membrane-spanning segments follow: residues 385–404 (FLHAIMPSTFIPLYTMVTFS) and 425–445 (GLFFLGSLIAISSTYLLIHYM). The N-linked (GlcNAc...) asparagine glycan is linked to N465.

It belongs to the aromatic-ring hydroxylase family. KMO subfamily. Requires FAD as cofactor. In terms of tissue distribution, highest levels in placenta and liver. Detectable in kidney.

It localises to the mitochondrion outer membrane. The catalysed reaction is L-kynurenine + NADPH + O2 + H(+) = 3-hydroxy-L-kynurenine + NADP(+) + H2O. Its pathway is cofactor biosynthesis; NAD(+) biosynthesis; quinolinate from L-kynurenine: step 1/3. Its function is as follows. Catalyzes the hydroxylation of L-kynurenine (L-Kyn) to form 3-hydroxy-L-kynurenine (L-3OHKyn). Required for synthesis of quinolinic acid, a neurotoxic NMDA receptor antagonist and potential endogenous inhibitor of NMDA receptor signaling in axonal targeting, synaptogenesis and apoptosis during brain development. Quinolinic acid may also affect NMDA receptor signaling in pancreatic beta cells, osteoblasts, myocardial cells, and the gastrointestinal tract. The sequence is that of Kynurenine 3-monooxygenase from Homo sapiens (Human).